We begin with the raw amino-acid sequence, 131 residues long: Large ribosomal subunit protein bL17 (131 aa).

This sequence belongs to the bacterial ribosomal protein bL17 family. As to quaternary structure, part of the 50S ribosomal subunit. Contacts protein L32.

The chain is Large ribosomal subunit protein bL17 from Shewanella frigidimarina (strain NCIMB 400).